Here is a 392-residue protein sequence, read N- to C-terminus: Hercynylcysteine sulfoxide lyase (392 aa).

K219 bears the N6-(pyridoxal phosphate)lysine mark.

This sequence belongs to the class-V pyridoxal-phosphate-dependent aminotransferase family. EgtE subfamily. The cofactor is pyridoxal 5'-phosphate.

Its subcellular location is the cytoplasm. The protein resides in the nucleus. It catalyses the reaction S-(hercyn-2-yl)-L-cysteine S-oxide + AH2 + H(+) = ergothioneine + pyruvate + A + NH4(+). The protein operates within amino-acid biosynthesis; ergothioneine biosynthesis. Catalyzes the conversion of hercynylcysteine sulfoxide to ergothioneine by cleaving the cysteine residue at the sulfur atom, the last step in the biosynthesis pathway of ergothioneine. This chain is Hercynylcysteine sulfoxide lyase, found in Schizosaccharomyces pombe (strain 972 / ATCC 24843) (Fission yeast).